A 347-amino-acid chain; its full sequence is Probable dual-specificity RNA methyltransferase RlmN (347 aa).

Catalysis depends on glutamate 91, which acts as the Proton acceptor. Residues 97–327 (YKYGNSICVS…ATVRREMGSD (231 aa)) enclose the Radical SAM core domain. Cysteine 104 and cysteine 332 are joined by a disulfide. Residues cysteine 111, cysteine 115, and cysteine 118 each coordinate [4Fe-4S] cluster. S-adenosyl-L-methionine contacts are provided by residues 158-159 (GE), serine 190, 213-215 (SLH), and asparagine 289. Catalysis depends on cysteine 332, which acts as the S-methylcysteine intermediate.

It belongs to the radical SAM superfamily. RlmN family. [4Fe-4S] cluster is required as a cofactor.

The protein localises to the cytoplasm. The catalysed reaction is adenosine(2503) in 23S rRNA + 2 reduced [2Fe-2S]-[ferredoxin] + 2 S-adenosyl-L-methionine = 2-methyladenosine(2503) in 23S rRNA + 5'-deoxyadenosine + L-methionine + 2 oxidized [2Fe-2S]-[ferredoxin] + S-adenosyl-L-homocysteine. It carries out the reaction adenosine(37) in tRNA + 2 reduced [2Fe-2S]-[ferredoxin] + 2 S-adenosyl-L-methionine = 2-methyladenosine(37) in tRNA + 5'-deoxyadenosine + L-methionine + 2 oxidized [2Fe-2S]-[ferredoxin] + S-adenosyl-L-homocysteine. Specifically methylates position 2 of adenine 2503 in 23S rRNA and position 2 of adenine 37 in tRNAs. In Clostridium perfringens (strain 13 / Type A), this protein is Probable dual-specificity RNA methyltransferase RlmN.